We begin with the raw amino-acid sequence, 331 residues long: DNA-directed RNA polymerase subunit alpha (331 aa).

Positions 1–246 are alpha N-terminal domain (alpha-NTD); sequence MMQTSRTLHN…GLFSPLQEVS (246 aa). The tract at residues 256 to 331 is alpha C-terminal domain (alpha-CTD); the sequence is AEDNQKNQIP…LTLPRERSKT (76 aa).

This sequence belongs to the RNA polymerase alpha chain family. In terms of assembly, in cyanobacteria the RNAP catalytic core is composed of 2 alpha, 1 beta, 1 beta', 1 gamma and 1 omega subunit. When a sigma factor is associated with the core the holoenzyme is formed, which can initiate transcription.

It catalyses the reaction RNA(n) + a ribonucleoside 5'-triphosphate = RNA(n+1) + diphosphate. In terms of biological role, DNA-dependent RNA polymerase catalyzes the transcription of DNA into RNA using the four ribonucleoside triphosphates as substrates. This chain is DNA-directed RNA polymerase subunit alpha, found in Synechococcus sp. (strain JA-3-3Ab) (Cyanobacteria bacterium Yellowstone A-Prime).